A 449-amino-acid polypeptide reads, in one-letter code: BPI fold-containing family B member 6 (449 aa).

The signal sequence occupies residues 1 to 18; it reads MLCSLSLVLCGLLAGTRA. The N-linked (GlcNAc...) asparagine glycan is linked to Asn-115. A disulfide bridge connects residues Cys-138 and Cys-172.

The protein belongs to the BPI/LBP/Plunc superfamily. BPI/LBP family.

It is found in the secreted. This is BPI fold-containing family B member 6 (Bpifb6) from Mus musculus (Mouse).